Reading from the N-terminus, the 356-residue chain is Thrombopoietin (356 aa).

An N-terminal signal peptide occupies residues 1–21 (MELTDLLLAAMLLAVARLTLS). 2 disulfide bridges follow: C28–C172 and C50–C106. N-linked (GlcNAc...) asparagine glycosylation is found at N197, N206, N235, N249, N256, N336, and N351. The disordered stretch occupies residues 291–356 (GGLPPSPSLA…PHPRNLSQET (66 aa)). A compositionally biased stretch (polar residues) spans 330 to 339 (PSTTMPNSTA).

The protein belongs to the EPO/TPO family. As to expression, found mainly in the liver, kidney and skeletal muscle.

It is found in the secreted. Functionally, lineage-specific cytokine affecting the proliferation and maturation of megakaryocytes from their committed progenitor cells. It acts at a late stage of megakaryocyte development. It may be the major physiological regulator of circulating platelets. The protein is Thrombopoietin (Thpo) of Mus musculus (Mouse).